The sequence spans 300 residues: ATP-dependent (S)-NAD(P)H-hydrate dehydratase (300 aa).

Residues 7–289 enclose the YjeF C-terminal domain; that stretch reads IEARLKSIIP…ESIPSVFDQV (283 aa). Residues Gly-107 and 160 to 166 contribute to the (6S)-NADPHX site; that span reads NVMEYRR. Residues 194–198 and 213–222 each bind ATP; these read KGQVD and GSPRRCGGQG. Position 223 (Asp-223) interacts with (6S)-NADPHX.

Belongs to the NnrD/CARKD family. Mg(2+) serves as cofactor.

The catalysed reaction is (6S)-NADHX + ATP = ADP + phosphate + NADH + H(+). The enzyme catalyses (6S)-NADPHX + ATP = ADP + phosphate + NADPH + H(+). Catalyzes the dehydration of the S-form of NAD(P)HX at the expense of ATP, which is converted to ADP. Together with NAD(P)HX epimerase, which catalyzes the epimerization of the S- and R-forms, the enzyme allows the repair of both epimers of NAD(P)HX, a damaged form of NAD(P)H that is a result of enzymatic or heat-dependent hydration. The sequence is that of ATP-dependent (S)-NAD(P)H-hydrate dehydratase from Entamoeba histolytica (strain ATCC 30459 / HM-1:IMSS / ABRM).